The chain runs to 137 residues: Glutamate mutase sigma subunit (137 aa).

One can recognise a B12-binding domain in the interval 3–137; that stretch reads KKTIVLGVIG…ADMKEVLGVE (135 aa). Adenosylcob(III)alamin contacts are provided by residues 13–17, His16, 61–63, and 93–97; these read SDCHA, SSL, and NIVVG.

This sequence belongs to the methylaspartate mutase GlmS subunit family. Heterotetramer composed of 2 epsilon subunits (GlmE) and 2 sigma subunits (GlmS). GlmE exists as a homodimer and GlmS as a monomer. It depends on adenosylcob(III)alamin as a cofactor.

The catalysed reaction is (2S,3S)-3-methyl-L-aspartate = L-glutamate. The protein operates within amino-acid degradation; L-glutamate degradation via mesaconate pathway; acetate and pyruvate from L-glutamate: step 1/4. Its function is as follows. Catalyzes the carbon skeleton rearrangement of L-glutamate to L-threo-3-methylaspartate ((2S,3S)-3-methylaspartate). The sequence is that of Glutamate mutase sigma subunit from Clostridium tetanomorphum.